We begin with the raw amino-acid sequence, 741 residues long: Interleukin-17 receptor D (741 aa).

A signal peptide spans 1–26; that stretch reads MAPGRELGAFLLALLAFCGGRRLAEA. Topologically, residues 27–301 are extracellular; sequence AGGPGGRRGA…VHSPWAGPIR (275 aa). N57, N82, N173, N208, and N279 each carry an N-linked (GlcNAc...) asparagine glycan. Residues 302–322 form a helical membrane-spanning segment; sequence AIAITVPLVVISAFATLFTVM. At 323–741 the chain is on the cytoplasmic side; sequence CRKKQQENIY…TDELQAIAPL (419 aa). An SEFIR domain is found at 357-510; the sequence is RPKVFICYSS…LMDNLPQLYS (154 aa). Residues 688–703 show a composition bias toward low complexity; the sequence is TETSSITGSVSSSSGL. The segment at 688–708 is disordered; that stretch reads TETSSITGSVSSSSGLGEEEP.

It localises to the membrane. In terms of biological role, feedback inhibitor of fibroblast growth factor mediated Ras-MAPK signaling and ERK activation. May inhibit FGF-induced FGFR1 tyrosine phosphorylation. Inhibits TGFB-induced epithelial-to-mesenchymal transition in lens epithelial cells. This chain is Interleukin-17 receptor D (IL17RD), found in Gallus gallus (Chicken).